The sequence spans 188 residues: dCTP deaminase (188 aa).

DCTP-binding positions include 111–116, 135–137, Gln-156, Tyr-170, and Gln-180; these read KSTYAR and TLE. The active-site Proton donor/acceptor is the Glu-137.

It belongs to the dCTP deaminase family. As to quaternary structure, homotrimer.

It carries out the reaction dCTP + H2O + H(+) = dUTP + NH4(+). The protein operates within pyrimidine metabolism; dUMP biosynthesis; dUMP from dCTP (dUTP route): step 1/2. Catalyzes the deamination of dCTP to dUTP. This chain is dCTP deaminase, found in Nitrosomonas eutropha (strain DSM 101675 / C91 / Nm57).